The following is a 966-amino-acid chain: Probable transport protein MmpL11 (966 aa).

12 helical membrane-spanning segments follow: residues 13-33 (WLVFTGWLLALVPAVYLAMTQ), 188-208 (IILMVLVAVFGSLAAAAIPLA), 214-234 (VVITMGLVFVLSMHTTMSVFV), 235-255 (TSTVSMFGIALAVDYSLFILM), 279-299 (GLAVVLSGMTVIASLTGIYLI), 311-331 (AILAVAVAMLTSATLTPAVLA), 373-393 (ALAASTVLLVMAAPATLMVLG), 527-547 (TQPLVLVFVAVIAFLMLLISI), 557-577 (VLMTLLSVAAAYGSLVMVFQW), 595-615 (VPPLVLAMTFGLSMDYEIFLL), 646-666 (AALIMIAVFCGFAFAGMPLVA), and 668-688 (IGVACAVAIAVDATVVRLVLV).

The protein belongs to the resistance-nodulation-cell division (RND) (TC 2.A.6) family. MmpL subfamily.

Its subcellular location is the cell membrane. This chain is Probable transport protein MmpL11 (mmpL11), found in Mycobacterium bovis (strain ATCC BAA-935 / AF2122/97).